A 541-amino-acid polypeptide reads, in one-letter code: Zinc finger protein 655 (541 aa).

The tract at residues 1-22 (MEEVTSQEAAESPRGHFQPLEN) is disordered. 6 C2H2-type zinc fingers span residues 243–265 (YKCD…QRIH), 271–293 (YKCK…KRIH), 334–356 (YKCG…QRTH), 361–383 (CKCT…QRLH), 411–433 (YSCN…QRIH), and 439–461 (HECN…HKMH). The segment at 495–517 (FDCDAWEENFSQRAHLIQHERVH) adopts a C2H2-type 7; degenerate zinc-finger fold.

Belongs to the krueppel C2H2-type zinc-finger protein family. In terms of assembly, interacts with VAV1 and CDK4. Interacts with INTS13; promoting association with the integrator complex.

Its subcellular location is the nucleus. In terms of biological role, probable transcription factor. This Mus musculus (Mouse) protein is Zinc finger protein 655 (Znf655).